The chain runs to 196 residues: Xanthine phosphoribosyltransferase (196 aa).

Xanthine contacts are provided by Leu-20 and Asn-27. Position 128–132 (128–132 (ATGAA)) interacts with 5-phospho-alpha-D-ribose 1-diphosphate. Lys-156 contributes to the xanthine binding site.

It belongs to the purine/pyrimidine phosphoribosyltransferase family. Xpt subfamily. Homodimer.

Its subcellular location is the cytoplasm. The catalysed reaction is XMP + diphosphate = xanthine + 5-phospho-alpha-D-ribose 1-diphosphate. The protein operates within purine metabolism; XMP biosynthesis via salvage pathway; XMP from xanthine: step 1/1. Functionally, converts the preformed base xanthine, a product of nucleic acid breakdown, to xanthosine 5'-monophosphate (XMP), so it can be reused for RNA or DNA synthesis. In Brevibacillus brevis (strain 47 / JCM 6285 / NBRC 100599), this protein is Xanthine phosphoribosyltransferase.